An 89-amino-acid chain; its full sequence is Small ribosomal subunit protein uS14A (89 aa).

It belongs to the universal ribosomal protein uS14 family. In terms of assembly, part of the 30S ribosomal subunit. Contacts proteins S3 and S10.

Its function is as follows. Binds 16S rRNA, required for the assembly of 30S particles and may also be responsible for determining the conformation of the 16S rRNA at the A site. This is Small ribosomal subunit protein uS14A from Listeria monocytogenes serotype 4b (strain F2365).